The chain runs to 334 residues: ADP-L-glycero-D-manno-heptose-6-epimerase (334 aa).

NADP(+)-binding positions include 11-12 (FI), 32-33 (DN), Lys-39, Lys-54, 77-81 (QGACS), and Asn-94. Residue Tyr-141 is the Proton acceptor of the active site. Lys-145 serves as a coordination point for NADP(+). Asn-171 is a substrate binding site. NADP(+) contacts are provided by Val-172 and Lys-180. Lys-180 acts as the Proton acceptor in catalysis. Substrate-binding positions include Arg-182, His-189, 203-206 (FGSN), Arg-216, and Tyr-295.

This sequence belongs to the NAD(P)-dependent epimerase/dehydratase family. HldD subfamily. In terms of assembly, homopentamer. Requires NADP(+) as cofactor.

It catalyses the reaction ADP-D-glycero-beta-D-manno-heptose = ADP-L-glycero-beta-D-manno-heptose. Its pathway is nucleotide-sugar biosynthesis; ADP-L-glycero-beta-D-manno-heptose biosynthesis; ADP-L-glycero-beta-D-manno-heptose from D-glycero-beta-D-manno-heptose 7-phosphate: step 4/4. Its function is as follows. Catalyzes the interconversion between ADP-D-glycero-beta-D-manno-heptose and ADP-L-glycero-beta-D-manno-heptose via an epimerization at carbon 6 of the heptose. The polypeptide is ADP-L-glycero-D-manno-heptose-6-epimerase (Neisseria meningitidis serogroup C / serotype 2a (strain ATCC 700532 / DSM 15464 / FAM18)).